A 1180-amino-acid chain; its full sequence is Nonsense-mediated mRNA decay factor SMG7 (1180 aa).

2 TPR repeats span residues 151-184 and 186-218; these read QHCL…VPSN and QPYN…KFPF. Disordered regions lie at residues 496–636, 692–795, 893–913, 1019–1127, and 1148–1180; these read PQEK…TQTT, QTAS…SYMQ, CSDQ…SSPL, SLFE…WAAQ, and SSMM…NPPH. Residues 504-520 show a composition bias toward polar residues; sequence LQESSNGEQTPNESTHG. Composition is skewed to basic and acidic residues over residues 547–559, 584–606, and 615–627; these read ENIK…REQN, NEQK…KTTD, and TELR…EARK. Positions 692-718 are enriched in polar residues; that stretch reads QTASHPQSANPVQTGKPSHIPYSQQRP. Residues 728 to 740 are compositionally biased toward pro residues; the sequence is PPQPQQTQPPPPQ. Over residues 741–778 the composition is skewed to low complexity; that stretch reads TSQQALQQSVQLQLQQQQQQQQQQQQQQQQSPTKQSSQ. Positions 1026–1038 are enriched in polar residues; the sequence is WSPSLPASSDHST. The span at 1039–1065 shows a compositional bias: low complexity; that stretch reads PASQSPHSSNPSSLPSSPPTHSHGSMP. Positions 1076–1090 are enriched in basic and acidic residues; it reads DSRDRRANDRWKAEK. The segment covering 1103–1125 has biased composition (polar residues); the sequence is SASTSSVPETNSWHQGAPTSTWA.

Its subcellular location is the cytoplasm. It is found in the nucleus. Functionally, plays a role in nonsense-mediated mRNA decay. Recruits UPF1 to cytoplasmic mRNA decay bodies. Together with SMG5 is thought to provide a link to the mRNA degradation machinery involving exonucleolytic pathways, and to serve as an adapter for UPF1 to protein phosphatase 2A (PP2A), thereby triggering UPF1 dephosphorylation. Required for normal embryonic development. This Danio rerio (Zebrafish) protein is Nonsense-mediated mRNA decay factor SMG7.